Here is a 448-residue protein sequence, read N- to C-terminus: Methylenetetrahydrofolate--tRNA-(uracil-5-)-methyltransferase TrmFO (448 aa).

13–18 provides a ligand contact to FAD; that stretch reads GAGLAG.

Belongs to the MnmG family. TrmFO subfamily. FAD serves as cofactor.

It is found in the cytoplasm. The catalysed reaction is uridine(54) in tRNA + (6R)-5,10-methylene-5,6,7,8-tetrahydrofolate + NADH + H(+) = 5-methyluridine(54) in tRNA + (6S)-5,6,7,8-tetrahydrofolate + NAD(+). It carries out the reaction uridine(54) in tRNA + (6R)-5,10-methylene-5,6,7,8-tetrahydrofolate + NADPH + H(+) = 5-methyluridine(54) in tRNA + (6S)-5,6,7,8-tetrahydrofolate + NADP(+). Functionally, catalyzes the folate-dependent formation of 5-methyl-uridine at position 54 (M-5-U54) in all tRNAs. The polypeptide is Methylenetetrahydrofolate--tRNA-(uracil-5-)-methyltransferase TrmFO (Streptococcus pyogenes serotype M12 (strain MGAS2096)).